The sequence spans 341 residues: S-adenosylmethionine:tRNA ribosyltransferase-isomerase (341 aa).

Belongs to the QueA family. Monomer.

It localises to the cytoplasm. It catalyses the reaction 7-aminomethyl-7-carbaguanosine(34) in tRNA + S-adenosyl-L-methionine = epoxyqueuosine(34) in tRNA + adenine + L-methionine + 2 H(+). Its pathway is tRNA modification; tRNA-queuosine biosynthesis. Transfers and isomerizes the ribose moiety from AdoMet to the 7-aminomethyl group of 7-deazaguanine (preQ1-tRNA) to give epoxyqueuosine (oQ-tRNA). The chain is S-adenosylmethionine:tRNA ribosyltransferase-isomerase from Clostridium perfringens (strain ATCC 13124 / DSM 756 / JCM 1290 / NCIMB 6125 / NCTC 8237 / Type A).